Consider the following 423-residue polypeptide: Enolase (423 aa).

A (2R)-2-phosphoglycerate-binding site is contributed by Gln162. Glu204 acts as the Proton donor in catalysis. Asp241, Glu284, and Asp311 together coordinate Mg(2+). Positions 336, 365, 366, and 387 each coordinate (2R)-2-phosphoglycerate. Lys336 serves as the catalytic Proton acceptor.

It belongs to the enolase family. The cofactor is Mg(2+).

The protein localises to the cytoplasm. Its subcellular location is the secreted. It is found in the cell surface. The enzyme catalyses (2R)-2-phosphoglycerate = phosphoenolpyruvate + H2O. The protein operates within carbohydrate degradation; glycolysis; pyruvate from D-glyceraldehyde 3-phosphate: step 4/5. Functionally, catalyzes the reversible conversion of 2-phosphoglycerate (2-PG) into phosphoenolpyruvate (PEP). It is essential for the degradation of carbohydrates via glycolysis. The protein is Enolase of Bartonella bacilliformis (strain ATCC 35685 / KC583 / Herrer 020/F12,63).